The chain runs to 198 residues: ATP synthase subunit delta (198 aa).

It belongs to the ATPase delta chain family. In terms of assembly, F-type ATPases have 2 components, F(1) - the catalytic core - and F(0) - the membrane proton channel. F(1) has five subunits: alpha(3), beta(3), gamma(1), delta(1), epsilon(1). F(0) has three main subunits: a(1), b(2) and c(10-14). The alpha and beta chains form an alternating ring which encloses part of the gamma chain. F(1) is attached to F(0) by a central stalk formed by the gamma and epsilon chains, while a peripheral stalk is formed by the delta and b chains.

Its subcellular location is the cell inner membrane. Its function is as follows. F(1)F(0) ATP synthase produces ATP from ADP in the presence of a proton or sodium gradient. F-type ATPases consist of two structural domains, F(1) containing the extramembraneous catalytic core and F(0) containing the membrane proton channel, linked together by a central stalk and a peripheral stalk. During catalysis, ATP synthesis in the catalytic domain of F(1) is coupled via a rotary mechanism of the central stalk subunits to proton translocation. In terms of biological role, this protein is part of the stalk that links CF(0) to CF(1). It either transmits conformational changes from CF(0) to CF(1) or is implicated in proton conduction. This is ATP synthase subunit delta from Gluconacetobacter diazotrophicus (strain ATCC 49037 / DSM 5601 / CCUG 37298 / CIP 103539 / LMG 7603 / PAl5).